A 501-amino-acid polypeptide reads, in one-letter code: Probable malate:quinone oxidoreductase (501 aa).

It belongs to the MQO family. The cofactor is FAD.

It catalyses the reaction (S)-malate + a quinone = a quinol + oxaloacetate. It participates in carbohydrate metabolism; tricarboxylic acid cycle; oxaloacetate from (S)-malate (quinone route): step 1/1. The chain is Probable malate:quinone oxidoreductase from Geobacillus kaustophilus (strain HTA426).